The primary structure comprises 173 residues: MNMGLFYGSSTCYTEMAAEKIRDIIGPELVTLHNLKDDSPKLMEQYDVLILGIPTWDFGEIQEDWEAVWDQLDDLNLEGKIVALYGLGDQLGYGEWFLDALGMLHDKLSTKGVKFVGYWPTEGYEFTSPKPVIADGQLFVGLALDETNQYDLSDERIQSWCEQILNEMAEHYA.

The Flavodoxin-like domain maps to 3–165 (MGLFYGSSTC…RIQSWCEQIL (163 aa)).

The protein belongs to the flavodoxin family. It depends on FMN as a cofactor.

Its function is as follows. Low-potential electron donor to a number of redox enzymes. In Escherichia coli O157:H7, this protein is Flavodoxin 2 (fldB).